Consider the following 607-residue polypeptide: Elongation factor 4 (607 aa).

Residues 11–193 (SKIRNFSIIA…QIVEKVPAPT (183 aa)) enclose the tr-type G domain. Residues 23 to 28 (DHGKST) and 140 to 143 (NKID) contribute to the GTP site.

The protein belongs to the TRAFAC class translation factor GTPase superfamily. Classic translation factor GTPase family. LepA subfamily.

The protein resides in the cell membrane. The enzyme catalyses GTP + H2O = GDP + phosphate + H(+). In terms of biological role, required for accurate and efficient protein synthesis under certain stress conditions. May act as a fidelity factor of the translation reaction, by catalyzing a one-codon backward translocation of tRNAs on improperly translocated ribosomes. Back-translocation proceeds from a post-translocation (POST) complex to a pre-translocation (PRE) complex, thus giving elongation factor G a second chance to translocate the tRNAs correctly. Binds to ribosomes in a GTP-dependent manner. This is Elongation factor 4 from Bacillus anthracis (strain CDC 684 / NRRL 3495).